Here is a 328-residue protein sequence, read N- to C-terminus: Ubiquitin carboxyl-terminal hydrolase isozyme L5 (328 aa).

Residues 7-225 (EWCLMESDPG…IRFNLMAIVS (219 aa)) enclose the UCH catalytic domain. An N6-succinyllysine modification is found at Lys-47. Residue Cys-88 is the Nucleophile of the active site. Lys-158 is subject to N6-acetyllysine. His-164 serves as the catalytic Proton donor. Lys-288 carries the post-translational modification N6-succinyllysine. In terms of domain architecture, ULD spans 290 to 318 (NYLPFIMELLKTLAEHQQLIPLVEKAKEK). The interaction with ADRM1 stretch occupies residues 312-328 (VEKAKEKQNAKKAQETK).

It belongs to the peptidase C12 family. In terms of assembly, component of the 19S (PA700) regulatory complex of the 26S proteasome. Interacts with ADRM1 and NFRKB. Component of the INO80 complex; specifically part of a complex module associated with N-terminus of INO80.

The protein localises to the cytoplasm. Its subcellular location is the nucleus. It carries out the reaction Thiol-dependent hydrolysis of ester, thioester, amide, peptide and isopeptide bonds formed by the C-terminal Gly of ubiquitin (a 76-residue protein attached to proteins as an intracellular targeting signal).. With respect to regulation, activated by ADRM1. Inhibited by interaction with NFRKB. Functionally, protease that specifically cleaves 'Lys-48'-linked polyubiquitin chains. Deubiquitinating enzyme associated with the 19S regulatory subunit of the 26S proteasome. Putative regulatory component of the INO80 complex; however is inactive in the INO80 complex and is activated by a transient interaction of the INO80 complex with the proteasome via ADRM1. The sequence is that of Ubiquitin carboxyl-terminal hydrolase isozyme L5 (UCHL5) from Bos taurus (Bovine).